We begin with the raw amino-acid sequence, 95 residues long: HssA/B-like protein 45 (95 aa).

Residues 1–31 (MTLFSSISSISNPMTSSKSSIASFGSGTSMS) form a disordered region.

This sequence belongs to the hssA/B family.

The chain is HssA/B-like protein 45 (hssl45) from Dictyostelium discoideum (Social amoeba).